The primary structure comprises 214 residues: UPF0758 protein (214 aa).

One can recognise an MPN domain in the interval 92-214 (VLSSWQALLD…ELSFRAEGLL (123 aa)). Histidine 163, histidine 165, and aspartate 176 together coordinate Zn(2+). Residues 163–176 (HNHPSGDPTPSQAD) carry the JAMM motif motif.

Belongs to the UPF0758 family.

The polypeptide is UPF0758 protein (Rhodobacter capsulatus (Rhodopseudomonas capsulata)).